Consider the following 72-residue polypeptide: Translation initiation factor IF-1 (72 aa).

Positions 1–72 (MAKDDVIEVD…DKGRITFRYK (72 aa)) constitute an S1-like domain.

Belongs to the IF-1 family. In terms of assembly, component of the 30S ribosomal translation pre-initiation complex which assembles on the 30S ribosome in the order IF-2 and IF-3, IF-1 and N-formylmethionyl-tRNA(fMet); mRNA recruitment can occur at any time during PIC assembly.

It localises to the cytoplasm. One of the essential components for the initiation of protein synthesis. Stabilizes the binding of IF-2 and IF-3 on the 30S subunit to which N-formylmethionyl-tRNA(fMet) subsequently binds. Helps modulate mRNA selection, yielding the 30S pre-initiation complex (PIC). Upon addition of the 50S ribosomal subunit IF-1, IF-2 and IF-3 are released leaving the mature 70S translation initiation complex. The polypeptide is Translation initiation factor IF-1 (Nitratiruptor sp. (strain SB155-2)).